The chain runs to 130 residues: Small ribosomal subunit protein uS8 (130 aa).

This sequence belongs to the universal ribosomal protein uS8 family. Part of the 30S ribosomal subunit.

In terms of biological role, one of the primary rRNA binding proteins, it binds directly to 16S rRNA central domain where it helps coordinate assembly of the platform of the 30S subunit. The chain is Small ribosomal subunit protein uS8 from Nitrosopumilus maritimus (strain SCM1).